A 104-amino-acid chain; its full sequence is uncharacterized protein (104 aa).

The segment at 55–104 is disordered; that stretch reads RPFSSDRINRPFSPDKKGEPIFPDKRDRPFSPDRINRPFSPDKKGEPIFP.

The protein resides in the plastid. This is an uncharacterized protein from Euglena longa (Euglenophycean alga).